The following is a 104-amino-acid chain: UPF0145 protein STH1265 (104 aa).

Belongs to the UPF0145 family.

The protein is UPF0145 protein STH1265 of Symbiobacterium thermophilum (strain DSM 24528 / JCM 14929 / IAM 14863 / T).